Consider the following 89-residue polypeptide: Small ribosomal subunit protein uS15 (89 aa).

It belongs to the universal ribosomal protein uS15 family. In terms of assembly, part of the 30S ribosomal subunit. Forms a bridge to the 50S subunit in the 70S ribosome, contacting the 23S rRNA.

In terms of biological role, one of the primary rRNA binding proteins, it binds directly to 16S rRNA where it helps nucleate assembly of the platform of the 30S subunit by binding and bridging several RNA helices of the 16S rRNA. Forms an intersubunit bridge (bridge B4) with the 23S rRNA of the 50S subunit in the ribosome. The polypeptide is Small ribosomal subunit protein uS15 (Polynucleobacter asymbioticus (strain DSM 18221 / CIP 109841 / QLW-P1DMWA-1) (Polynucleobacter necessarius subsp. asymbioticus)).